The chain runs to 372 residues: MNNTEFYDRLGVSKNASADEIKKAYRKLSKKYHPDINKEPGAEDKYKEVQEAYETLSDDQKRAAYDQYGAAGANGGFGGFNGAGGFGGFEDIFSSFFGGGGSSRNPNAPRQGDDLQYRVNLTFEEAIFGTEKEVKYHREAGCRTCNGSGAKPGTSPVTCGRCHGAGVINVDTQTPLGMMRRQVTCDVCHGRGKEIKYPCTTCHGTGHEKQAHSVHVKIPAGVETGQQIRLAGQGEAGFNGGPYGDLYVVVSVEASDKFEREGTTIFYNLNLNFVQAALGDTVDIPTVHGDVELVIPEGTQTGKKFRLRSKGAPSLRGGAVGDQYVTVNVVTPTGLNDRQKVALKEFAAAGDLKVNPKKKGFFDHIKDAFDGE.

The 65-residue stretch at 5–69 folds into the J domain; the sequence is EFYDRLGVSK…QKRAAYDQYG (65 aa). The segment at 129-211 adopts a CR-type zinc-finger fold; it reads GTEKEVKYHR…CHGTGHEKQA (83 aa). Cysteine 142, cysteine 145, cysteine 159, cysteine 162, cysteine 185, cysteine 188, cysteine 199, and cysteine 202 together coordinate Zn(2+). 4 CXXCXGXG motif repeats span residues 142–149, 159–166, 185–192, and 199–206; these read CRTCNGSG, CGRCHGAG, CDVCHGRG, and CTTCHGTG.

This sequence belongs to the DnaJ family. In terms of assembly, homodimer. Requires Zn(2+) as cofactor.

Its subcellular location is the cytoplasm. In terms of biological role, participates actively in the response to hyperosmotic and heat shock by preventing the aggregation of stress-denatured proteins and by disaggregating proteins, also in an autonomous, DnaK-independent fashion. Unfolded proteins bind initially to DnaJ; upon interaction with the DnaJ-bound protein, DnaK hydrolyzes its bound ATP, resulting in the formation of a stable complex. GrpE releases ADP from DnaK; ATP binding to DnaK triggers the release of the substrate protein, thus completing the reaction cycle. Several rounds of ATP-dependent interactions between DnaJ, DnaK and GrpE are required for fully efficient folding. Also involved, together with DnaK and GrpE, in the DNA replication of plasmids through activation of initiation proteins. The sequence is that of Chaperone protein DnaJ from Streptococcus pneumoniae (strain ATCC BAA-255 / R6).